The primary structure comprises 337 residues: Casein kinase II subunit alpha (337 aa).

The 286-residue stretch at 47–332 (YEIIRKIGRG…TREAMEHPYF (286 aa)) folds into the Protein kinase domain. ATP contacts are provided by residues 53 to 61 (IGRGKYSEV) and lysine 76. The active-site Proton acceptor is the aspartate 164.

It belongs to the protein kinase superfamily. CMGC Ser/Thr protein kinase family. CK2 subfamily. As to quaternary structure, tetramer of two alpha and two beta chains.

The catalysed reaction is L-seryl-[protein] + ATP = O-phospho-L-seryl-[protein] + ADP + H(+). It catalyses the reaction L-threonyl-[protein] + ATP = O-phospho-L-threonyl-[protein] + ADP + H(+). In terms of biological role, casein kinases are operationally defined by their preferential utilization of acidic proteins such as caseins as substrates. The alpha chain contains the catalytic site. The polypeptide is Casein kinase II subunit alpha (casK) (Dictyostelium discoideum (Social amoeba)).